The following is a 552-amino-acid chain: MTDGKDLEAEIHPLKSENRKVPENAGALAGKEPRGTPAPQTRLSHCRTAAFFLSLFACLLVVFVVSFIIPCPDRPALQGVWRIDYNAAVAYDFLAAEDVNKDKIQDILFLYKNTNSSRGNSSFSCADEGFSCPCTFVAAVSGASGSVLWERPVAQDRAFVECGILQPRGSAAPSACVVLGRPGSLVAVDTLTGKTLWSQPSSFGGNASVLSPLLRVPDLDADGAPDLLVLIQEENQVNGSIYSGGTGQQVSPPDSLGVDGTSGSILHVTRAGAHYVLIPCGTALCSRSVKGLYEKVSRRDSPLKSDPLWEDMLSAASHRLVVHSSGAIRYLMNVPGKAGDDLLLVSTEAYMLLDGQDLTPRWTFGTTQVLRKPVLGYYKPDTPAVLVENGTGPDRQVLLLDLGSGAVLWSQALPGLPGDPPSASLPTADHRSAFFFWGIHEPTDSNQTEPGAAGRRLYMLHPTLPGVLLELDNVSVPIVAFQVVLLEPGRHAACILLTGPASPSPPGLVSVTKHKVQDLVLAGRVVHLAEGGAESDQAVRDRLSRLRYRSEA.

The Cytoplasmic portion of the chain corresponds to 1 to 48 (MTDGKDLEAEIHPLKSENRKVPENAGALAGKEPRGTPAPQTRLSHCRT). A helical; Signal-anchor for type II membrane protein membrane pass occupies residues 49-69 (AAFFLSLFACLLVVFVVSFII). Residues 70-552 (PCPDRPALQG…LSRLRYRSEA (483 aa)) are Extracellular-facing. Residues N115, N238, and N473 are each glycosylated (N-linked (GlcNAc...) asparagine).

This sequence belongs to the FAM234 family.

The protein resides in the membrane. The chain is Protein FAM234A (FAM234A) from Bos taurus (Bovine).